Reading from the N-terminus, the 37-residue chain is Photosystem I reaction center subunit VIII (37 aa).

Residues 10–30 (IFVPLVGLVFPAIAMASLSLY) form a helical membrane-spanning segment.

The protein belongs to the PsaI family.

The protein localises to the plastid. The protein resides in the chloroplast thylakoid membrane. Its function is as follows. May help in the organization of the PsaL subunit. The chain is Photosystem I reaction center subunit VIII from Gossypium barbadense (Sea Island cotton).